A 145-amino-acid polypeptide reads, in one-letter code: 3-dehydroquinate dehydratase (145 aa).

Y23 serves as the catalytic Proton acceptor. N74, H80, and D87 together coordinate substrate. H100 acts as the Proton donor in catalysis. Substrate is bound by residues 101–102 and R111; that span reads LS.

This sequence belongs to the type-II 3-dehydroquinase family. As to quaternary structure, homododecamer.

The catalysed reaction is 3-dehydroquinate = 3-dehydroshikimate + H2O. It functions in the pathway metabolic intermediate biosynthesis; chorismate biosynthesis; chorismate from D-erythrose 4-phosphate and phosphoenolpyruvate: step 3/7. In terms of biological role, catalyzes a trans-dehydration via an enolate intermediate. The chain is 3-dehydroquinate dehydratase from Halalkalibacterium halodurans (strain ATCC BAA-125 / DSM 18197 / FERM 7344 / JCM 9153 / C-125) (Bacillus halodurans).